The chain runs to 299 residues: Nicotinate-nucleotide pyrophosphorylase [carboxylating] (299 aa).

The important for hexamer formation stretch occupies residues 8–12; that stretch reads FLLPP. Residues Arg-102, 138-139, 160-161, Lys-171, Glu-201, Asp-222, 248-250, and Gly-270 contribute to the quinolinate site; these read RK, HR, and SGG.

The protein belongs to the NadC/ModD family. Hexamer formed by 3 homodimers.

The enzyme catalyses nicotinate beta-D-ribonucleotide + CO2 + diphosphate = quinolinate + 5-phospho-alpha-D-ribose 1-diphosphate + 2 H(+). Its pathway is cofactor biosynthesis; NAD(+) biosynthesis; nicotinate D-ribonucleotide from quinolinate: step 1/1. In terms of biological role, involved in the catabolism of quinolinic acid (QA). The sequence is that of Nicotinate-nucleotide pyrophosphorylase [carboxylating] (Qprt) from Rattus norvegicus (Rat).